We begin with the raw amino-acid sequence, 452 residues long: Pup--protein ligase (452 aa).

Glu9 is a Mg(2+) binding site. Residue Arg53 coordinates ATP. Residue Tyr55 participates in Mg(2+) binding. The Proton acceptor role is filled by Asp57. Glu63 serves as a coordination point for Mg(2+). ATP is bound by residues Thr66 and Trp419.

Belongs to the Pup ligase/Pup deamidase family. Pup-conjugating enzyme subfamily.

The catalysed reaction is ATP + [prokaryotic ubiquitin-like protein]-L-glutamate + [protein]-L-lysine = ADP + phosphate + N(6)-([prokaryotic ubiquitin-like protein]-gamma-L-glutamyl)-[protein]-L-lysine.. Its pathway is protein degradation; proteasomal Pup-dependent pathway. It participates in protein modification; protein pupylation. Catalyzes the covalent attachment of the prokaryotic ubiquitin-like protein modifier Pup to the proteasomal substrate proteins, thereby targeting them for proteasomal degradation. This tagging system is termed pupylation. The ligation reaction involves the side-chain carboxylate of the C-terminal glutamate of Pup and the side-chain amino group of a substrate lysine. This chain is Pup--protein ligase, found in Nakamurella multipartita (strain ATCC 700099 / DSM 44233 / CIP 104796 / JCM 9543 / NBRC 105858 / Y-104) (Microsphaera multipartita).